Reading from the N-terminus, the 111-residue chain is Large ribosomal subunit protein uL22 (111 aa).

The protein belongs to the universal ribosomal protein uL22 family. As to quaternary structure, part of the 50S ribosomal subunit.

In terms of biological role, this protein binds specifically to 23S rRNA; its binding is stimulated by other ribosomal proteins, e.g. L4, L17, and L20. It is important during the early stages of 50S assembly. It makes multiple contacts with different domains of the 23S rRNA in the assembled 50S subunit and ribosome. The globular domain of the protein is located near the polypeptide exit tunnel on the outside of the subunit, while an extended beta-hairpin is found that lines the wall of the exit tunnel in the center of the 70S ribosome. This chain is Large ribosomal subunit protein uL22, found in Chlamydia felis (strain Fe/C-56) (Chlamydophila felis).